Here is a 141-residue protein sequence, read N- to C-terminus: Large ribosomal subunit protein uL11 (141 aa).

The protein belongs to the universal ribosomal protein uL11 family. In terms of assembly, part of the ribosomal stalk of the 50S ribosomal subunit. Interacts with L10 and the large rRNA to form the base of the stalk. L10 forms an elongated spine to which L12 dimers bind in a sequential fashion forming a multimeric L10(L12)X complex. In terms of processing, one or more lysine residues are methylated.

Forms part of the ribosomal stalk which helps the ribosome interact with GTP-bound translation factors. This chain is Large ribosomal subunit protein uL11, found in Trichodesmium erythraeum (strain IMS101).